The chain runs to 331 residues: Ketol-acid reductoisomerase (NADP(+)) (331 aa).

In terms of domain architecture, KARI N-terminal Rossmann spans A2–T182. NADP(+) is bound by residues Y25–Q28, S51, S53, and D83–Q86. H108 is a catalytic residue. G134 serves as a coordination point for NADP(+). The KARI C-terminal knotted domain maps to T183–L328. The Mg(2+) site is built by D191, E195, E227, and E231. S252 contributes to the substrate binding site.

It belongs to the ketol-acid reductoisomerase family. The cofactor is Mg(2+).

The catalysed reaction is (2R)-2,3-dihydroxy-3-methylbutanoate + NADP(+) = (2S)-2-acetolactate + NADPH + H(+). It catalyses the reaction (2R,3R)-2,3-dihydroxy-3-methylpentanoate + NADP(+) = (S)-2-ethyl-2-hydroxy-3-oxobutanoate + NADPH + H(+). It functions in the pathway amino-acid biosynthesis; L-isoleucine biosynthesis; L-isoleucine from 2-oxobutanoate: step 2/4. Its pathway is amino-acid biosynthesis; L-valine biosynthesis; L-valine from pyruvate: step 2/4. Functionally, involved in the biosynthesis of branched-chain amino acids (BCAA). Catalyzes an alkyl-migration followed by a ketol-acid reduction of (S)-2-acetolactate (S2AL) to yield (R)-2,3-dihydroxy-isovalerate. In the isomerase reaction, S2AL is rearranged via a Mg-dependent methyl migration to produce 3-hydroxy-3-methyl-2-ketobutyrate (HMKB). In the reductase reaction, this 2-ketoacid undergoes a metal-dependent reduction by NADPH to yield (R)-2,3-dihydroxy-isovalerate. The polypeptide is Ketol-acid reductoisomerase (NADP(+)) (Nostoc sp. (strain PCC 7120 / SAG 25.82 / UTEX 2576)).